A 614-amino-acid polypeptide reads, in one-letter code: Spastin (614 aa).

The interval 1 to 45 is disordered; it reads MNSPGGRGKKKGSGGPSSPVPPRPPPPCQARSRPAPKPAPPPQSP. The interval 1-50 is required for nuclear localization; the sequence is MNSPGGRGKKKGSGGPSSPVPPRPPPPCQARSRPAPKPAPPPQSPHKRNL. At 1–56 the chain is on the cytoplasmic side; that stretch reads MNSPGGRGKKKGSGGPSSPVPPRPPPPCQARSRPAPKPAPPPQSPHKRNLYYFSYP. The interval 1-80 is required for interaction with ATL1; that stretch reads MNSPGGRGKK…LGLLFVWLCQ (80 aa). The required for midbody localization stretch occupies residues 1 to 192; it reads MNSPGGRGKK…LVMAKDRLQL (192 aa). Residues 1 to 298 form a required for interaction with RTN1 region; that stretch reads MNSPGGRGKK…STPKTNRTNK (298 aa). A Nuclear localization signal motif is present at residues 4 to 11; the sequence is PGGRGKKK. Composition is skewed to pro residues over residues 18-28 and 35-44; these read SPVPPRPPPPC and APKPAPPPQS. Residues 50–87 are required for interaction with SSNA1 and microtubules; the sequence is LYYFSYPLFLGFALLRLVAFHLGLLFVWLCQRFSRALM. Residues 57–77 constitute an intramembrane region (helical); sequence LFLGFALLRLVAFHLGLLFVW. A Nuclear export signal motif is present at residues 59–67; that stretch reads LGFALLRLV. The Cytoplasmic portion of the chain corresponds to 78–614; the sequence is LCQRFSRALM…WNKDFGDTTV (537 aa). Residues 110–194 form a sufficient for interaction with CHMP1B region; sequence EAERVRAFHK…MAKDRLQLLE (85 aa). Residues 112–198 are required for interaction with microtubules; the sequence is ERVRAFHKQA…RLQLLEKLQP (87 aa). The region spanning 118 to 193 is the MIT domain; it reads HKQAFEYISV…VMAKDRLQLL (76 aa). The disordered stretch occupies residues 220–310; sequence NGHLQSESGA…TPTTAARKKK (91 aa). A sufficient for microtubule severing region spans residues 226-614; the sequence is ESGAVPKRKD…WNKDFGDTTV (389 aa). Serine 243 and serine 266 each carry phosphoserine. Positions 268 to 326 are required for interaction with microtubules and microtubule severing; that stretch reads SGLSMVSGVRQGPGSAAATHKSTPKTNRTNKPSTPTTAARKKKDLKNFRNVDSNLANLI. The span at 287-304 shows a compositional bias: polar residues; sequence HKSTPKTNRTNKPSTPTT. A Phosphothreonine modification is found at threonine 304. Positions 307–310 match the Nuclear localization signal motif; it reads RKKK. 380–387 provides a ligand contact to ATP; the sequence is GPPGNGKT. Serine 595 carries the post-translational modification Phosphoserine.

Belongs to the AAA ATPase family. Spastin subfamily. Homohexamer. Mostly monomeric, but assembles into hexameric structure for short periods of time. Oligomerization seems to be a prerequisite for catalytic activity. Binding to ATP in a cleft between two adjacent subunits stabilizes the homohexameric form. Binds to microtubules at least in part via the alpha-tubulin and beta-tubulin tails. The hexamer adopts a ring conformation through which microtubules pass prior to being severed. Does not interact strongly with tubulin heterodimers. Interacts (via MIT domain) with CHMP1B; the interaction is direct. Interacts with SSNA1. Interacts with ATL1. Interacts with RTN1. Interacts with ZFYVE27. Interacts with REEP1. Interacts (via MIT domain) with IST1.

Its subcellular location is the membrane. The protein resides in the endoplasmic reticulum. It localises to the midbody. The protein localises to the cytoplasm. It is found in the cytoskeleton. Its subcellular location is the microtubule organizing center. The protein resides in the centrosome. It localises to the perinuclear region. The protein localises to the nucleus. It is found in the spindle. Its subcellular location is the cell projection. The protein resides in the axon. The catalysed reaction is n ATP + n H2O + a microtubule = n ADP + n phosphate + (n+1) alpha/beta tubulin heterodimers.. Its activity is regulated as follows. Allosteric enzyme with a cooperative mechanism; at least two neighbor subunits influence each other strongly in spastin hexamers. Microtubule binding promotes cooperative interactions among spastin subunits. Its function is as follows. ATP-dependent microtubule severing protein that specifically recognizes and cuts microtubules that are polyglutamylated. Preferentially recognizes and acts on microtubules decorated with short polyglutamate tails: severing activity increases as the number of glutamates per tubulin rises from one to eight, but decreases beyond this glutamylation threshold. Severing activity is not dependent on tubulin acetylation or detyrosination. Microtubule severing promotes reorganization of cellular microtubule arrays and the release of microtubules from the centrosome following nucleation. It is critical for the biogenesis and maintenance of complex microtubule arrays in axons, spindles and cilia. SPAST is involved in abscission step of cytokinesis and nuclear envelope reassembly during anaphase in cooperation with the ESCRT-III complex. Recruited at the midbody, probably by IST1, and participates in membrane fission during abscission together with the ESCRT-III complex. Recruited to the nuclear membrane by IST1 and mediates microtubule severing, promoting nuclear envelope sealing and mitotic spindle disassembly during late anaphase. Required for membrane traffic from the endoplasmic reticulum (ER) to the Golgi and endosome recycling. Recruited by IST1 to endosomes and regulates early endosomal tubulation and recycling by mediating microtubule severing. Probably plays a role in axon growth and the formation of axonal branches. The sequence is that of Spastin from Bos taurus (Bovine).